Consider the following 130-residue polypeptide: Small ribosomal subunit protein uS9 (130 aa).

The tract at residues 108 to 130 is disordered; it reads PRMKERRKYGLKKARRAPQFSKR. Positions 111 to 130 are enriched in basic residues; sequence KERRKYGLKKARRAPQFSKR.

It belongs to the universal ribosomal protein uS9 family.

The chain is Small ribosomal subunit protein uS9 from Desulforamulus reducens (strain ATCC BAA-1160 / DSM 100696 / MI-1) (Desulfotomaculum reducens).